Consider the following 346-residue polypeptide: tRNA N6-adenosine threonylcarbamoyltransferase (346 aa).

Fe cation is bound by residues His-110 and His-114. Substrate contacts are provided by residues 132–136 (LLSGG), Asp-165, Gly-178, and Asn-274. Asp-298 lines the Fe cation pocket.

The protein belongs to the KAE1 / TsaD family. Requires Fe(2+) as cofactor.

Its subcellular location is the cytoplasm. It catalyses the reaction L-threonylcarbamoyladenylate + adenosine(37) in tRNA = N(6)-L-threonylcarbamoyladenosine(37) in tRNA + AMP + H(+). Required for the formation of a threonylcarbamoyl group on adenosine at position 37 (t(6)A37) in tRNAs that read codons beginning with adenine. Is involved in the transfer of the threonylcarbamoyl moiety of threonylcarbamoyl-AMP (TC-AMP) to the N6 group of A37, together with TsaE and TsaB. TsaD likely plays a direct catalytic role in this reaction. The polypeptide is tRNA N6-adenosine threonylcarbamoyltransferase (Borreliella burgdorferi (strain ATCC 35210 / DSM 4680 / CIP 102532 / B31) (Borrelia burgdorferi)).